A 150-amino-acid polypeptide reads, in one-letter code: MSRRKVRDTKEETVTLGPAVSDGEHVFGVARIFASFNDTFIHVTDLSGRETLVRITGGMKVKADRDESSPYAAMLAAQDVATRCKELGITALHIKLRATGGNKTKTPGRGAQSALRALARSGMKIGRIEDVTPIPSDSTRRKSGRRGRRL.

The interval 130–150 (DVTPIPSDSTRRKSGRRGRRL) is disordered. The span at 141 to 150 (RKSGRRGRRL) shows a compositional bias: basic residues.

This sequence belongs to the universal ribosomal protein uS11 family.

This Lupinus luteus (European yellow lupine) protein is Small ribosomal subunit protein uS11 (RPS14).